The following is a 331-amino-acid chain: Elongation factor Ts, mitochondrial (331 aa).

The N-terminal 14 residues, 1 to 14 (MIVSRQVIRSVVRK), are a transit peptide targeting the mitochondrion.

Belongs to the EF-Ts family.

Its subcellular location is the mitochondrion. Functionally, associates with the EF-Tu.GDP complex and induces the exchange of GDP to GTP. It remains bound to the aminoacyl-tRNA.EF-Tu.GTP complex up to the GTP hydrolysis stage on the ribosome. This Brugia malayi (Filarial nematode worm) protein is Elongation factor Ts, mitochondrial.